A 651-amino-acid chain; its full sequence is Acetyl-coenzyme A synthetase (651 aa).

Residues 193-196 (RRGK) and Thr-312 each bind CoA. Residues 388-390 (GEP), 412-417 (DTWWQT), Asp-501, and Arg-516 contribute to the ATP site. A CoA-binding site is contributed by Ser-524. Residues Val-538, His-540, and Val-543 each contribute to the Mg(2+) site. Lys-610 carries the N6-acetyllysine modification.

Belongs to the ATP-dependent AMP-binding enzyme family. Mg(2+) serves as cofactor. Acetylated. Deacetylation by the SIR2-homolog deacetylase activates the enzyme.

The enzyme catalyses acetate + ATP + CoA = acetyl-CoA + AMP + diphosphate. In terms of biological role, catalyzes the conversion of acetate into acetyl-CoA (AcCoA), an essential intermediate at the junction of anabolic and catabolic pathways. AcsA undergoes a two-step reaction. In the first half reaction, AcsA combines acetate with ATP to form acetyl-adenylate (AcAMP) intermediate. In the second half reaction, it can then transfer the acetyl group from AcAMP to the sulfhydryl group of CoA, forming the product AcCoA. This Streptomyces coelicolor (strain ATCC BAA-471 / A3(2) / M145) protein is Acetyl-coenzyme A synthetase.